The following is a 124-amino-acid chain: Small ribosomal subunit protein eS6 (124 aa).

Belongs to the eukaryotic ribosomal protein eS6 family.

The sequence is that of Small ribosomal subunit protein eS6 from Methanococcus maripaludis (strain DSM 14266 / JCM 13030 / NBRC 101832 / S2 / LL).